The sequence spans 569 residues: Rab GTPase-binding effector protein 2 (569 aa).

Disordered stretches follow at residues 1 to 38 (MAAAAPVAADDDERRRRPGAALEDSRPQEGANGEAELG), 181 to 267 (QRRP…ASLV), and 388 to 414 (RAEQLPSSAPQGPQQEQGEEESLPSSV). Ala2 carries the N-acetylalanine modification. Residues 29-38 (EGANGEAELG) show a composition bias toward low complexity. Residues 34-184 (EAELGELSRL…ELIQEIQRRP (151 aa)) are a coiled coil. Phosphoserine is present on residues Ser189, Ser193, Ser200, and Ser204. Over residues 245–257 (SSSSLPRSRQGLS) the composition is skewed to low complexity. The stretch at 292–391 (WEQLQMEGRQ…EENQGLRAEQ (100 aa)) forms a coiled coil. A compositionally biased stretch (low complexity) spans 393–403 (PSSAPQGPQQE). Residues 423–523 (RTRQEARAQL…LQAELETSEQ (101 aa)) are a coiled coil.

It belongs to the rabaptin family. As to quaternary structure, heterodimer with RABGEF1. The dimer binds RAB5A that has been activated by GTP-binding. Interacts with SDCCAG8; this interaction is important for ciliogenesis regulation. Interacts with RAB4; this interaction may mediate VEGFR2 cell surface expression.

It is found in the cytoplasm. Its subcellular location is the early endosome. The protein resides in the cytoskeleton. The protein localises to the microtubule organizing center. It localises to the centrosome. It is found in the cilium basal body. In terms of biological role, plays a role in membrane trafficking and in homotypic early endosome fusion. Participates in arteriogenesis by regulating vascular endothelial growth factor receptor 2/VEGFR2 cell surface expression and endosomal trafficking. By interacting with SDCCAG8, localizes to centrosomes and plays a critical role in ciliogenesis. The chain is Rab GTPase-binding effector protein 2 (RABEP2) from Pongo abelii (Sumatran orangutan).